The following is a 106-amino-acid chain: Large ribosomal subunit protein uL24 (106 aa).

The protein belongs to the universal ribosomal protein uL24 family. As to quaternary structure, part of the 50S ribosomal subunit.

Functionally, one of two assembly initiator proteins, it binds directly to the 5'-end of the 23S rRNA, where it nucleates assembly of the 50S subunit. One of the proteins that surrounds the polypeptide exit tunnel on the outside of the subunit. The protein is Large ribosomal subunit protein uL24 of Blochmanniella pennsylvanica (strain BPEN).